A 477-amino-acid chain; its full sequence is Aryl-phospho-beta-D-glucosidase BglC (477 aa).

Catalysis depends on E170, which acts as the Proton donor. The active-site Nucleophile is the E378.

This sequence belongs to the glycosyl hydrolase 1 family.

It catalyses the reaction 6-phospho-beta-D-glucosyl-(1-&gt;4)-D-glucose + H2O = D-glucose 6-phosphate + D-glucose. Its function is as follows. Is able to catalyze the hydrolysis of aryl-phospho-beta-D-glucosides such as 4-methylumbelliferyl-phospho-beta-D-glucopyranoside (MUG-P), phosphoarbutin and phosphosalicin. Is not essential for growth on arbutin and salicin as the sole carbon source. This is Aryl-phospho-beta-D-glucosidase BglC (bglC) from Bacillus subtilis (strain 168).